The following is a 385-amino-acid chain: Cytochrome b (385 aa).

At 1 to 27 the chain is on the mitochondrial matrix side; sequence MRLLKSHPLLKLVNSYLIDASQPSNIS. Y16 provides a ligand contact to a ubiquinone. Residues 28–51 traverse the membrane as a helical segment; the sequence is YLWNFGSLLACCLIIQIVTGVTLA. Residues 52–74 lie on the Mitochondrial intermembrane side of the membrane; that stretch reads MHYSPNVLEAFNSIEHIMRDVNN. A helical transmembrane segment spans residues 75–102; sequence GWLVRYLHSNTASAFFFLVYLHIGRGMY. 2 residues coordinate heme b: H82 and H96. Residues 103-110 lie on the Mitochondrial matrix side of the membrane; that stretch reads YGSYRAPR. A helical transmembrane segment spans residues 111-135; the sequence is TLVWAIGTVILILMMATAFLGYVLP. Topologically, residues 136–172 are mitochondrial intermembrane; that stretch reads YGQMSLWGATVITNLISAIPWIGQDIVEFIWGGFSVN. A helical membrane pass occupies residues 173 to 205; the sequence is NATLNRFFALHFVLPFILAALVLMHLIALHDTA. Residues H183 and H197 each contribute to the heme b site. H202 lines the a ubiquinone pocket. The Mitochondrial matrix segment spans residues 206–224; the sequence is GSSNPLGVSGNYDRITFAP. A helical membrane pass occupies residues 225–247; that stretch reads YYLFKDLITIFIFIYVLSSFVFF. Topologically, residues 248-288 are mitochondrial intermembrane; that stretch reads MPNVLGDSENYIMANPMQTPPAIVPEWYLLPFYAILRSIPN. A helical membrane pass occupies residues 289-309; the sequence is KLLGVIAMFSAILAIMLLPIT. Residues 310–320 lie on the Mitochondrial matrix side of the membrane; that stretch reads DLGRSKGLQFR. A helical transmembrane segment spans residues 321–341; sequence PLSKFAFWAFVVNFLILMKLG. Residues 342 to 348 lie on the Mitochondrial intermembrane side of the membrane; sequence ACHVESP. Residues 349 to 365 form a helical membrane-spanning segment; sequence FIELGQFSTIFYFSYFI. At 366–385 the chain is on the mitochondrial matrix side; sequence FIVPVLSLIENTLVDLNYLK.

The protein belongs to the cytochrome b family. As to quaternary structure, component of the ubiquinol-cytochrome c oxidoreductase (cytochrome b-c1 complex, complex III, CIII), a multisubunit enzyme composed of 10 subunits. The complex is composed of 3 respiratory subunits cytochrome b (cob), cytochrome c1 (cyt-1) and Rieske protein (fes-1), 2 core protein subunits pep and ucr-1, and 5 low-molecular weight protein subunits qcr6, qcr7, qcr8, qcr9 and probably NCU16844/qcr10. The complex exists as an obligatory dimer and forms supercomplexes (SCs) in the inner mitochondrial membrane with NADH-ubiquinone oxidoreductase (complex I, CI) and cytochrome c oxidase (complex IV, CIV), resulting in different assemblies (supercomplexes SCI(1)III(2), SCIII(2)IV(1) and SCIII(2)IV(2) as well as higher order I(x)III(y)IV(z) megacomplexes). It depends on heme b as a cofactor.

The protein resides in the mitochondrion inner membrane. The enzyme catalyses a quinol + 2 Fe(III)-[cytochrome c](out) = a quinone + 2 Fe(II)-[cytochrome c](out) + 2 H(+)(out). In terms of biological role, component of the ubiquinol-cytochrome c oxidoreductase, a multisubunit transmembrane complex that is part of the mitochondrial electron transport chain which drives oxidative phosphorylation. The respiratory chain contains 3 multisubunit complexes succinate dehydrogenase (complex II, CII), ubiquinol-cytochrome c oxidoreductase (cytochrome b-c1 complex, complex III, CIII) and cytochrome c oxidase (complex IV, CIV), that cooperate to transfer electrons derived from NADH and succinate to molecular oxygen, creating an electrochemical gradient over the inner membrane that drives transmembrane transport and the ATP synthase. The cytochrome b-c1 complex catalyzes electron transfer from ubiquinol to cytochrome c, linking this redox reaction to translocation of protons across the mitochondrial inner membrane, with protons being carried across the membrane as hydrogens on the quinol. In the process called Q cycle, 2 protons are consumed from the matrix, 4 protons are released into the intermembrane space and 2 electrons are passed to cytochrome c. Cytochrome b is a catalytic core subunit containing 2 b-type hemes BL and BH topographically segregated in the quinone reduction (Qi) and quinol oxidation (Q0) sites on opposite sides of the membrane. This chain is Cytochrome b (cob), found in Neurospora crassa (strain ATCC 24698 / 74-OR23-1A / CBS 708.71 / DSM 1257 / FGSC 987).